Consider the following 208-residue polypeptide: NAD(P)H-hydrate epimerase (208 aa).

A YjeF N-terminal domain is found at 10-208; sequence IRDAERQTLA…TLGVIMTPAN (199 aa). 54–58 contributes to the (6S)-NADPHX binding site; it reads NNGGD. The K(+) site is built by Asn-55 and Asp-117. (6S)-NADPHX is bound by residues 121-127 and Asp-150; that span reads GIGLNRP. A K(+)-binding site is contributed by Ser-153.

Belongs to the NnrE/AIBP family. K(+) serves as cofactor.

The catalysed reaction is (6R)-NADHX = (6S)-NADHX. It carries out the reaction (6R)-NADPHX = (6S)-NADPHX. In terms of biological role, catalyzes the epimerization of the S- and R-forms of NAD(P)HX, a damaged form of NAD(P)H that is a result of enzymatic or heat-dependent hydration. This is a prerequisite for the S-specific NAD(P)H-hydrate dehydratase to allow the repair of both epimers of NAD(P)HX. This chain is NAD(P)H-hydrate epimerase, found in Achromobacter xylosoxidans (strain A8).